Reading from the N-terminus, the 396-residue chain is MEVVGCKAKESSCTLRPAAMLFHGISGDHIQGIMEEMERRSKSESRLAKTVQMNGRETTMPSMSPEKPALCAGCGGKISDRYYLLAVDKQWHLRCLKCCECKLALESELTCFAKDGSIYCKEDYYRRFSVQRCARCHLGISASEMVMRARDSVYHLSCFTCTTCNKTLTTGDHFGMKDNLVYCRVHFETLIQGEYHPQLNYAELAAKGGGLALPYFNGTGTVQKGRPRKRKSPAMGIDIGSYSSGCNENDADHLDRDQQPYPPSQKTKRMRTSFKHHQLRTMKSYFAINHNPDAKDLKQLAQKTGLTKRVLQVWFQNARAKFRRNVLRQENGGVDKADGTSLPPPSSDSGALTPPSTATTLTDLTNPSITVVTSVTSSLDSHESGSPPQTTLTNLF.

LIM zinc-binding domains lie at 69–130 and 131–193; these read ALCA…RFSV and QRCA…LIQG. 3 disordered regions span residues 248–272, 328–365, and 377–396; these read ENDA…RMRT, RQEN…TDLT, and SSLD…TNLF. The segment at residues 267-326 is a DNA-binding region (homeobox); it reads TKRMRTSFKHHQLRTMKSYFAINHNPDAKDLKQLAQKTGLTKRVLQVWFQNARAKFRRNV. Low complexity predominate over residues 352–365; that stretch reads LTPPSTATTLTDLT. Residues 384 to 396 are compositionally biased toward polar residues; that stretch reads SGSPPQTTLTNLF.

The protein localises to the nucleus. Its function is as follows. May be involved in gonadal development. In Danio rerio (Zebrafish), this protein is LIM/homeobox protein Lhx9 (lhx9).